Consider the following 544-residue polypeptide: Chaperonin GroEL (544 aa).

ATP-binding positions include 30-33 (TLGP), Lys51, 87-91 (DGTTT), Gly415, and Asp495.

Belongs to the chaperonin (HSP60) family. As to quaternary structure, forms a cylinder of 14 subunits composed of two heptameric rings stacked back-to-back. Interacts with the co-chaperonin GroES.

Its subcellular location is the cytoplasm. It carries out the reaction ATP + H2O + a folded polypeptide = ADP + phosphate + an unfolded polypeptide.. Its function is as follows. Together with its co-chaperonin GroES, plays an essential role in assisting protein folding. The GroEL-GroES system forms a nano-cage that allows encapsulation of the non-native substrate proteins and provides a physical environment optimized to promote and accelerate protein folding. This chain is Chaperonin GroEL, found in Agrobacterium fabrum (strain C58 / ATCC 33970) (Agrobacterium tumefaciens (strain C58)).